The sequence spans 166 residues: 16S rRNA aminocarboxypropyltransferase (166 aa).

Positions 17, 62, 84, 99, and 103 each coordinate S-adenosyl-L-methionine.

Belongs to the TDD superfamily. TSR3 family.

It localises to the cytoplasm. The catalysed reaction is an N(1)-methylpseudouridine in rRNA + S-adenosyl-L-methionine = N(1)-methyl-N(3)-[(3S)-3-amino-3-carboxypropyl]pseudouridine in rRNA + S-methyl-5'-thioadenosine + H(+). Its function is as follows. Aminocarboxypropyltransferase that catalyzes the aminocarboxypropyl transfer on pseudouridine corresponding to position 914 in M.jannaschii 16S rRNA. It constitutes the last step in biosynthesis of the hypermodified N1-methyl-N3-(3-amino-3-carboxypropyl) pseudouridine (m1acp3-Psi). This Saccharolobus solfataricus (strain ATCC 35092 / DSM 1617 / JCM 11322 / P2) (Sulfolobus solfataricus) protein is 16S rRNA aminocarboxypropyltransferase.